The sequence spans 438 residues: Tol-Pal system protein TolB (438 aa).

Residues 1–36 (MTPAFRRADLTGFLRTYGAALILLLAAMLAWQPAQA) form the signal peptide.

The protein belongs to the TolB family. As to quaternary structure, the Tol-Pal system is composed of five core proteins: the inner membrane proteins TolA, TolQ and TolR, the periplasmic protein TolB and the outer membrane protein Pal. They form a network linking the inner and outer membranes and the peptidoglycan layer.

The protein resides in the periplasm. Functionally, part of the Tol-Pal system, which plays a role in outer membrane invagination during cell division and is important for maintaining outer membrane integrity. This chain is Tol-Pal system protein TolB, found in Bordetella pertussis (strain Tohama I / ATCC BAA-589 / NCTC 13251).